The primary structure comprises 856 residues: DNA mismatch repair protein MutS (856 aa).

607–614 (GPNMAGKS) provides a ligand contact to ATP.

This sequence belongs to the DNA mismatch repair MutS family.

In terms of biological role, this protein is involved in the repair of mismatches in DNA. It is possible that it carries out the mismatch recognition step. This protein has a weak ATPase activity. This is DNA mismatch repair protein MutS from Cytophaga hutchinsonii (strain ATCC 33406 / DSM 1761 / CIP 103989 / NBRC 15051 / NCIMB 9469 / D465).